A 614-amino-acid polypeptide reads, in one-letter code: MASTVDSNFFSSVPALHSNLGLLSPDQIELAKILLENGQSHLFQQWPELGVDDKEKLAFFDQIARLNSSYPGGLAAYIKTAKELLADSKVGKNPYDGFSPSVPSGENLTFGTDNFIEMEKRGVVEARNAAFVLVAGGLGERLGYNGIKVALPRETTTGTCFLQHYIESILALQEASNKIDSDGSERDIPFIIMTSDDTHSRTLDLLELNSYFGMKPTQVHLLKQEKVACLDDNDARLALDPHNKYSIQTKPHGHGDVHSLLYSSGLLHKWLEAGLKWVLFFQDTNGLLFNAIPASLGVSATKQYHVNSLAVPRKAKEAIGGISKLTHVDGRSMVINVEYNQLDPLLRASGFPDGDVNCETGFSPFPGNINQLILELGPYKDELQKTGGAIKEFVNPKYKDSTKTAFKSSTRLECMMQDYPKTLPPTARVGFTVMDIWLAYAPVKNNPEDAAKVPKGNPYHSATSGEMAIYRANSLILQKAGVKVEEPVKQVLNGQEVEVWSRITWKPKWGMIFSDIKKKVSGNCEVSQRSTMAIKGRNVFIKDLSLDGALIVDSIDDAEVKLGGLIKNNGWTMESVDYKDTSVPEEIRIRGFRFNKVEQLEKKLTQPGKFSVED.

At A2 the chain carries N-acetylalanine.

It belongs to the USP family. Mg(2+) is required as a cofactor. The cofactor is Mn(2+). Ubiquitous, but most abundant in rosette leaves, inflorescences, stems, stamens and pollen.

It catalyses the reaction a monosaccharide 1-phosphate + UTP + H(+) = a UDP-monosaccharide + diphosphate. Required for the synthesis of the intine, the pectocellulosic inner wall of developing pollen. May function as the terminal enzyme of the myo-inositol oxidation (MIO) pathway. May also play a role in the salvage pathway for synthesis of nucleotide sugars. Can use a wide range of substrates including glucose-1-phosphate, galactose-1-phosphate, xylose-1-phosphate, arabinose-1-phosphate and glucuronate-1-phosphate. In Arabidopsis thaliana (Mouse-ear cress), this protein is UDP-sugar pyrophosphorylase (USP).